The sequence spans 375 residues: Alcohol dehydrogenase 6 (375 aa).

The Zn(2+) site is built by C47, H69, C99, C102, C105, C113, and C175. NAD(+) contacts are provided by residues 200-205 (GLGGVG), D224, K229, 293-295 (VGS), and R370.

This sequence belongs to the zinc-containing alcohol dehydrogenase family. Class-V subfamily. In terms of assembly, dimer. Requires Zn(2+) as cofactor. As to expression, liver.

The protein localises to the cytoplasm. It carries out the reaction a primary alcohol + NAD(+) = an aldehyde + NADH + H(+). It catalyses the reaction a secondary alcohol + NAD(+) = a ketone + NADH + H(+). Alcohol dehydrogenase. Catalyzes the NAD-dependent oxidation of primary alcohols to the corresponding aldehydes. Oxidizes secondary alcohols to the corresponding ketones. In Peromyscus maniculatus (North American deer mouse), this protein is Alcohol dehydrogenase 6 (ADH6).